We begin with the raw amino-acid sequence, 292 residues long: 33 kDa chaperonin (292 aa).

2 disulfides stabilise this stretch: cysteine 238–cysteine 240 and cysteine 271–cysteine 274.

It belongs to the HSP33 family. Under oxidizing conditions two disulfide bonds are formed involving the reactive cysteines. Under reducing conditions zinc is bound to the reactive cysteines and the protein is inactive.

It localises to the cytoplasm. Redox regulated molecular chaperone. Protects both thermally unfolding and oxidatively damaged proteins from irreversible aggregation. Plays an important role in the bacterial defense system toward oxidative stress. This chain is 33 kDa chaperonin, found in Alkaliphilus metalliredigens (strain QYMF).